Consider the following 162-residue polypeptide: Ribonuclease (162 aa).

Positions 1-29 (MKKISSVFTMFALIAAILFSGFIPQQAYA) are cleaved as a signal peptide. Residues 30–53 (ETTLTPTATNKTASIQLTSDVHTL) constitute a propeptide that is removed on maturation. Catalysis depends on glutamate 125, which acts as the Proton acceptor. Histidine 154 serves as the catalytic Proton donor.

Belongs to the ribonuclease N1/T1 family.

It is found in the secreted. This is a purine-specific ribonuclease. This is Ribonuclease from Bacillus pumilus (Bacillus mesentericus).